Here is a 374-residue protein sequence, read N- to C-terminus: MHFTQVLISLSVLIACGPVGYGDITAHQQPSTATEESEQCSTCEFRQHSKLMRLHAIKSQILSKLRLKQAPNISRDVVKQLLPKAPPLQQLLDQYDVLGDDSKDGAVEEDDEHATTETIMTMATEPDPIVQVDRKPKCCFFSFSPKIQANRIVRAQLWVHLRPAEEATTVFLQISRLMPVKDGGRHRIRSLKIDVNAGVTSWQSIDVKQVLTVWLKQPETNRGIEINAYDAKGNDLAVTSTETGEDGLLPFMEVKISEGPKRIRRDSGLDCDENSSESRCCRYPLTVDFEDFGWDWIIAPKRYKANYCSGECDYMYLQKYPHTHLVNKASPRGTAGPCCTPTKMSPINMLYFNGKEQIIYGKIPSMVVDRCGCS.

An N-terminal signal peptide occupies residues 1–22 (MHFTQVLISLSVLIACGPVGYG). Residues 23–265 (DITAHQQPST…ISEGPKRIRR (243 aa)) constitute a propeptide that is removed on maturation. Residues Asn-72 and Asn-274 are each glycosylated (N-linked (GlcNAc...) asparagine). Cystine bridges form between Cys-271–Cys-281, Cys-280–Cys-339, Cys-308–Cys-371, and Cys-312–Cys-373.

It belongs to the TGF-beta family. As to quaternary structure, homodimer; disulfide-linked. In terms of tissue distribution, predominantly expressed in muscle. At hatching, expression is strongest in the skin epithelium, and is also found in the retina and brain. From day 28, expressed in skeletal muscle. In the adult, highest expression is seen in the gastrointestinal tract, brain, muscle, heart and testis. Also expressed in the adult pharynx, kidney, spleen, liver, gill, eyes, skin, swim bladder and ovary.

It is found in the secreted. Functionally, acts specifically as a negative regulator of skeletal muscle growth. May down-regulate muscle-specific transcription factors such as myod and myog. This chain is Growth/differentiation factor 8 (mstnb), found in Danio rerio (Zebrafish).